An 875-amino-acid polypeptide reads, in one-letter code: Phosphoenolpyruvate carboxylase (875 aa).

Active-site residues include His137 and Lys542.

Belongs to the PEPCase type 1 family. Mg(2+) is required as a cofactor.

It carries out the reaction oxaloacetate + phosphate = phosphoenolpyruvate + hydrogencarbonate. Its function is as follows. Forms oxaloacetate, a four-carbon dicarboxylic acid source for the tricarboxylic acid cycle. The sequence is that of Phosphoenolpyruvate carboxylase from Pseudomonas putida (strain ATCC 47054 / DSM 6125 / CFBP 8728 / NCIMB 11950 / KT2440).